A 307-amino-acid chain; its full sequence is 4-diphosphocytidyl-2-C-methyl-D-erythritol kinase (307 aa).

The active site involves Lys9. 94-104 (PIGAGLAGGSS) serves as a coordination point for ATP. Asp136 is a catalytic residue.

It belongs to the GHMP kinase family. IspE subfamily.

The enzyme catalyses 4-CDP-2-C-methyl-D-erythritol + ATP = 4-CDP-2-C-methyl-D-erythritol 2-phosphate + ADP + H(+). The protein operates within isoprenoid biosynthesis; isopentenyl diphosphate biosynthesis via DXP pathway; isopentenyl diphosphate from 1-deoxy-D-xylulose 5-phosphate: step 3/6. In terms of biological role, catalyzes the phosphorylation of the position 2 hydroxy group of 4-diphosphocytidyl-2C-methyl-D-erythritol. In Synechococcus sp. (strain CC9902), this protein is 4-diphosphocytidyl-2-C-methyl-D-erythritol kinase.